The primary structure comprises 1857 residues: Fatty acid synthase subunit alpha (1857 aa).

The segment at 96–132 (EEEPEATEPAPSATPAAPAAAPAAGAPPPPPSAGPAA) is disordered. Positions 102-119 (TEPAPSATPAAPAAAPAA) are enriched in low complexity. The region spanning 139-214 (VTAVDILRTL…ASMQATFNGQ (76 aa)) is the Carrier domain. S174 is subject to O-(pantetheine 4'-phosphoryl)serine. The interval 577-604 (QIIPQENGHSKKGGRSAAKRNTPTRPGK) is disordered. Positions 648–845 (KNVLMTGAGA…GAVIGWTRGT (198 aa)) are beta-ketoacyl reductase. The 542-residue stretch at 1092 to 1633 (LQEIVIQEDL…QKGAQVIGIH (542 aa)) folds into the Ketosynthase family 3 (KS3) domain. Catalysis depends on for beta-ketoacyl synthase activity residues C1275, H1518, and H1559. Mg(2+) is bound by residues D1743, V1744, and E1745. Acetyl-CoA contacts are provided by residues 1743 to 1745 (DVE), Y1769, S1779, 1788 to 1798 (EAVFKSLGVSS), 1812 to 1815 (VDAN), and 1842 to 1844 (ISH). 2 residues coordinate Mg(2+): S1843 and H1844.

It belongs to the thiolase-like superfamily. Fungal fatty acid synthetase subunit alpha family. [Alpha(6)beta(6)] hexamers of two multifunctional subunits (alpha and beta).

The enzyme catalyses acetyl-CoA + n malonyl-CoA + 2n NADPH + 4n H(+) = a long-chain-acyl-CoA + n CoA + n CO2 + 2n NADP(+).. It carries out the reaction a fatty acyl-[ACP] + malonyl-[ACP] + H(+) = a 3-oxoacyl-[ACP] + holo-[ACP] + CO2. The catalysed reaction is a (3R)-hydroxyacyl-[ACP] + NADP(+) = a 3-oxoacyl-[ACP] + NADPH + H(+). Functionally, fatty acid synthetase catalyzes the formation of long-chain fatty acids from acetyl-CoA, malonyl-CoA and NADPH. The alpha subunit contains domains for: acyl carrier protein, 3-oxoacyl-[acyl-carrier-protein] reductase, and 3-oxoacyl-[acyl-carrier-protein] synthase. The protein is Fatty acid synthase subunit alpha (FAS2) of Penicillium patulum (Penicillium griseofulvum).